A 1169-amino-acid chain; its full sequence is C5a peptidase (1169 aa).

Positions 1–31 (MRKKQKLPFDKLAIALMSTSILLNAQSDIKA) are cleaved as a signal peptide. The tract at residues 33–111 (TVTEDTPATE…ETIRDLNDPS (79 aa)) is disordered. The span at 48–67 (PQQTAVSEEAPSSSSKETNP) shows a compositional bias: polar residues. Residues 101 to 583 (KETIRDLNDP…AGAVDAKKAS (483 aa)) form the Peptidase S8 domain. Residues 102-111 (ETIRDLNDPS) show a composition bias toward basic and acidic residues. Active-site charge relay system residues include D132, H195, and S514. Positions 1028–1135 (NLLEGHSNKP…RDQLPTTNDK (108 aa)) are disordered. 3 stretches are compositionally biased toward basic and acidic residues: residues 1033-1056 (HSNK…KPEQ), 1063-1073 (PDKKPEAKPEQ), and 1080-1092 (PDKK…EKDS). Tandem repeats lie at residues 1036 to 1052 (KPEQ…TPET), 1053 to 1069 (KPEQ…KPEA), 1070 to 1086 (KPEQ…KPET), and 1087 to 1103 (KPEK…TPQK). Positions 1036–1103 (KPEQDGSDQV…GQTPGKTPQK (68 aa)) are 4 X 17 AA tandem repeats. Polar residues predominate over residues 1093–1108 (SGQTPGKTPQKGQPSR). Residues 1129–1133 (LPTTN) carry the LPXTG sorting signal motif. T1132 carries the pentaglycyl murein peptidoglycan amidated threonine modification. Residues 1133–1169 (NDKDTNRLHLLKLVMTTFFFGLVAHIFKTKRQKETKK) constitute a propeptide, removed by sortase.

Belongs to the peptidase S8 family. In terms of processing, cleaved by SpeB protease; leading to its degradation. Degradation by SpeB is probably strictly regulated to preserve integrity of C5a peptidase.

The protein localises to the secreted. It localises to the cell wall. The catalysed reaction is The primary cleavage site is at 67-His-|-Lys-68 in human C5a with a minor secondary cleavage site at 58-Ala-|-Ser-59.. Its function is as follows. This virulence factor of S.pyogenes specifically cleaves the human serum chemotaxin C5a at '68-Lys-|-Asp-69' bond near its C-terminus, destroying its ability to serve as a chemoattractant. The protein is C5a peptidase (scpA) of Streptococcus pyogenes serotype M3 (strain ATCC BAA-595 / MGAS315).